We begin with the raw amino-acid sequence, 81 residues long: U-megalopygitoxin(3)-Mo4 (81 aa).

The first 20 residues, 1–20 (MNSKFVLIVVFLAVVSICFA), serve as a signal peptide directing secretion.

The protein belongs to the caterpillar 3 family. Post-translationally, contains 3 disulfide bonds. In terms of tissue distribution, expressed by the venom apparatus.

The protein localises to the secreted. Functionally, probable toxin. The sequence is that of U-megalopygitoxin(3)-Mo4 from Megalopyge opercularis (Southern flannel moth).